The primary structure comprises 134 residues: Large ribosomal subunit protein uL16 (134 aa).

Basic residues predominate over residues 1–20 (MLLQPKRTKFRKMHKGRNRG). A disordered region spans residues 1–21 (MLLQPKRTKFRKMHKGRNRGT).

It belongs to the universal ribosomal protein uL16 family. In terms of assembly, part of the 50S ribosomal subunit.

Its function is as follows. Binds 23S rRNA and is also seen to make contacts with the A and possibly P site tRNAs. The polypeptide is Large ribosomal subunit protein uL16 (Blochmanniella pennsylvanica (strain BPEN)).